Reading from the N-terminus, the 261-residue chain is Pantothenate synthetase (261 aa).

M29–H36 is a binding site for ATP. H36 acts as the Proton donor in catalysis. Q60 serves as a coordination point for (R)-pantoate. Q60 serves as a coordination point for beta-alanine. G147–D150 is an ATP binding site. Residue Q153 coordinates (R)-pantoate. Position 184–187 (L184–R187) interacts with ATP.

It belongs to the pantothenate synthetase family. As to quaternary structure, homodimer.

The protein resides in the cytoplasm. The enzyme catalyses (R)-pantoate + beta-alanine + ATP = (R)-pantothenate + AMP + diphosphate + H(+). Its pathway is cofactor biosynthesis; (R)-pantothenate biosynthesis; (R)-pantothenate from (R)-pantoate and beta-alanine: step 1/1. Its function is as follows. Catalyzes the condensation of pantoate with beta-alanine in an ATP-dependent reaction via a pantoyl-adenylate intermediate. The sequence is that of Pantothenate synthetase from Francisella tularensis subsp. holarctica (strain FTNF002-00 / FTA).